The following is a 627-amino-acid chain: Chaperone protein DnaK (627 aa).

Thr197 is subject to Phosphothreonine; by autocatalysis. A compositionally biased stretch (polar residues) spans 602–611 (ENQHSEANTV). The tract at residues 602-627 (ENQHSEANTVNDEKVVDADFQDVDKK) is disordered. Positions 612-627 (NDEKVVDADFQDVDKK) are enriched in basic and acidic residues.

Belongs to the heat shock protein 70 family.

Functionally, acts as a chaperone. The protein is Chaperone protein DnaK of Rickettsia felis (strain ATCC VR-1525 / URRWXCal2) (Rickettsia azadi).